The primary structure comprises 73 residues: MAKISKFQDKQVEAILNDMIAVLEKHQAPVDLSLVVLGNMVTHLLNSSVGSQQRIVLAKVFSDALMNSVKNSK.

The protein belongs to the UPF0352 family.

The protein is UPF0352 protein HSM_0097 of Histophilus somni (strain 2336) (Haemophilus somnus).